The primary structure comprises 240 residues: Adapter protein MecA (240 aa).

The span at 119–132 (QRKQQKKNHQDKQQ) shows a compositional bias: basic and acidic residues. Residues 119 to 138 (QRKQQKKNHQDKQQRRAHKP) form a disordered region.

It belongs to the MecA family. Homodimer.

Functionally, enables the recognition and targeting of unfolded and aggregated proteins to the ClpC protease or to other proteins involved in proteolysis. This Staphylococcus epidermidis (strain ATCC 35984 / DSM 28319 / BCRC 17069 / CCUG 31568 / BM 3577 / RP62A) protein is Adapter protein MecA.